The sequence spans 1265 residues: Methionine synthase (1265 aa).

The 320-residue stretch at 19-338 (RDEINAILQK…DHIREIAEAV (320 aa)) folds into the Hcy-binding domain. Residues Cys260, Cys323, and Cys324 each contribute to the Zn(2+) site. One can recognise a Pterin-binding domain in the interval 371–632 (FVNIGERCNV…IHKELLQLCE (262 aa)). Residues 382-384 (GSR), Asp449, Asn470, Asp537, Asn579, Arg585, and Arg591 each bind (6S)-5,6,7,8-tetrahydrofolate. Residues 662–759 (QTDEWRNGPV…FMEKEREETR (98 aa)) enclose the B12-binding N-terminal domain. Residues Glu709, 782–786 (GDVHD), His785, Ser830, Thr834, and Ala886 each bind methylcob(III)alamin. Residues 772-907 (QGTIVLATVK…DENLKDEYFE (136 aa)) enclose the B12-binding domain. The AdoMet activation domain maps to 923–1265 (SLKERRYLPL…LGPILGYDTD (343 aa)). S-adenosyl-L-methionine contacts are provided by residues Asp974, Arg1172, and 1227-1228 (YF). Position 1264 is a phosphothreonine (Thr1264).

It belongs to the vitamin-B12 dependent methionine synthase family. In terms of assembly, monomer. Dimer. Forms a multiprotein complex with MMACHC, MMADHC and MTRR. It depends on methylcob(III)alamin as a cofactor. Requires Zn(2+) as cofactor. As to expression, widely expressed. Expressed at the highest levels in pancreas, heart, brain, skeletal muscle and placenta. Expressed at lower levels in lung, liver and kidney.

Its subcellular location is the cytoplasm. It catalyses the reaction (6S)-5-methyl-5,6,7,8-tetrahydrofolate + L-homocysteine = (6S)-5,6,7,8-tetrahydrofolate + L-methionine. It participates in amino-acid biosynthesis; L-methionine biosynthesis via de novo pathway; L-methionine from L-homocysteine (MetH route): step 1/1. Catalyzes the transfer of a methyl group from methylcob(III)alamin (MeCbl) to homocysteine, yielding enzyme-bound cob(I)alamin and methionine in the cytosol. MeCbl is an active form of cobalamin (vitamin B12) used as a cofactor for methionine biosynthesis. Cob(I)alamin form is regenerated to MeCbl by a transfer of a methyl group from 5-methyltetrahydrofolate. The processing of cobalamin in the cytosol occurs in a multiprotein complex composed of at least MMACHC, MMADHC, MTRR (methionine synthase reductase) and MTR which may contribute to shuttle safely and efficiently cobalamin towards MTR in order to produce methionine. The polypeptide is Methionine synthase (Homo sapiens (Human)).